The chain runs to 441 residues: Arginine biosynthesis bifunctional protein ArgJ, mitochondrial (441 aa).

A mitochondrion-targeting transit peptide spans 1-8 (MRISSTLL). Residues threonine 177, lysine 204, threonine 215, glutamate 301, asparagine 436, and serine 441 each contribute to the substrate site. Catalysis depends on threonine 215, which acts as the Nucleophile.

Belongs to the ArgJ family. In terms of assembly, heterodimer of an alpha and a beta chain. In terms of processing, the alpha and beta chains are autoproteolytically processed from a single precursor protein within the mitochondrion.

Its subcellular location is the mitochondrion matrix. It carries out the reaction N(2)-acetyl-L-ornithine + L-glutamate = N-acetyl-L-glutamate + L-ornithine. The catalysed reaction is L-glutamate + acetyl-CoA = N-acetyl-L-glutamate + CoA + H(+). It functions in the pathway amino-acid biosynthesis; L-arginine biosynthesis; L-ornithine and N-acetyl-L-glutamate from L-glutamate and N(2)-acetyl-L-ornithine (cyclic): step 1/1. The protein operates within amino-acid biosynthesis; L-arginine biosynthesis; N(2)-acetyl-L-ornithine from L-glutamate: step 1/4. Catalyzes two activities which are involved in the cyclic version of arginine biosynthesis: the synthesis of acetylglutamate from glutamate and acetyl-CoA, and of ornithine by transacetylation between acetylornithine and glutamate. In Saccharomyces cerevisiae (strain Lalvin EC1118 / Prise de mousse) (Baker's yeast), this protein is Arginine biosynthesis bifunctional protein ArgJ, mitochondrial.